The sequence spans 152 residues: MLALVQRVCEARVVVEGEVVGRIGRGLLVFLCAERGDTEAEGERLLVKLLKLRIFADAQGRMNRSVQDVGGGLLIVSQFTLAADASGGNRPSFSGAAAPADGLRLYEVFVRGARALHPEVESGQFGADMQVHLVNDGPVTVPLRIVPTALPV.

A Gly-cisPro motif, important for rejection of L-amino acids motif is present at residues 137–138 (GP).

The protein belongs to the DTD family. As to quaternary structure, homodimer.

It is found in the cytoplasm. The catalysed reaction is glycyl-tRNA(Ala) + H2O = tRNA(Ala) + glycine + H(+). It carries out the reaction a D-aminoacyl-tRNA + H2O = a tRNA + a D-alpha-amino acid + H(+). Its function is as follows. An aminoacyl-tRNA editing enzyme that deacylates mischarged D-aminoacyl-tRNAs. Also deacylates mischarged glycyl-tRNA(Ala), protecting cells against glycine mischarging by AlaRS. Acts via tRNA-based rather than protein-based catalysis; rejects L-amino acids rather than detecting D-amino acids in the active site. By recycling D-aminoacyl-tRNA to D-amino acids and free tRNA molecules, this enzyme counteracts the toxicity associated with the formation of D-aminoacyl-tRNA entities in vivo and helps enforce protein L-homochirality. The chain is D-aminoacyl-tRNA deacylase from Aromatoleum aromaticum (strain DSM 19018 / LMG 30748 / EbN1) (Azoarcus sp. (strain EbN1)).